The following is an 894-amino-acid chain: MAPQPVVTGLSPKEGPPGTRVIIRGEFLGTRVQDLIGLKICGSDCLLSAEWKSPNKIIARTGPAKGKGDIIVTTLSGGVGTSTVQFRAYHETIGPLKESAVWIEESPSQNFAWGRRTLAQSGLTQEDPLGLSIEGNEQKIPEDLRDLFPEACGDLSQEHFSPAWFLLENHLATSFEDLKAGLSYLKRKVESQKEGQLSFLKSNAGSVIDQLDTLMNIRDKLQEDVKLHGNETLNILETSIENSISESQKIFTDVLVRKEKADSTRSVLFALSRHKFLFCLPNSVDRRAKAGEYDIVVNDYSRAKNLFGKTEIPIFRKVLEEVDHRILSIRKQLHEKVVKMPQSVEQQKKLIKALISLELQQSGTPIGDKLRNIDPAWDAIEARAKYLEWTFRQTFDQHTSKDSGAQEKAKNRDSSQAPNRVNFCEELCDIAASQLPDLWRLGQLYFTGELRGPHDPKPGDFKRMVLNAIEKFCVYLRLAILIATDQRALRQSSGLAWPIGSASATHQFLPWIPQCLRFTRIAYATLISLDLPSEALDIIQKLIDEVRLFCFSIIFKRATDRCKKLGSQETWELGVEEYPGATLLPAALETLLIETLDEVQSVCMQRETREGNLLEPQSDGQREVTQRLQEFLSAFSAVIEELAFHSHDEETPTHNVSQLLGFPNAQQPDSVAGSGGAAAVTWEQRMLCCLANYAYCNKIFFPRLGDIFVRYGYPLPTLAIETARYTVNQLFTNLLEEYVEHKGDPLVGTIEPSMYLGRFQWDHEMEIGQLRPYAHECCDNLVGVYSEIYSISPALLRPILESIVQTISEELARLMSCVQRFSFTGAIQAHVDIRLLRDSLEGYVNETAKNYFMEALEAINPPLSGEQKRKADEILERVKRNMRLQLLCFSVKDP.

One can recognise an IPT/TIG domain in the interval 5-89; the sequence is PVVTGLSPKE…GTSTVQFRAY (85 aa). Residues 398–413 are compositionally biased toward basic and acidic residues; that stretch reads HTSKDSGAQEKAKNRD. Residues 398–417 are disordered; that stretch reads HTSKDSGAQEKAKNRDSSQA.

It belongs to the SEC5 family. The exocyst complex is composed of Sec3/Exoc1, Sec5/Exoc2, Sec6/Exoc3, Sec8/Exoc4, Sec10/Exoc5, Sec15/Exoc6, Exo70/Exoc7 and Exo84/Exoc8.

Component of the exocyst complex involved in the docking of exocytic vesicles with fusion sites on the plasma membrane. In Drosophila melanogaster (Fruit fly), this protein is Exocyst complex component 2.